The following is a 201-amino-acid chain: UPF0301 protein RHE_CH00966 (201 aa).

Belongs to the UPF0301 (AlgH) family.

This chain is UPF0301 protein RHE_CH00966, found in Rhizobium etli (strain ATCC 51251 / DSM 11541 / JCM 21823 / NBRC 15573 / CFN 42).